A 3387-amino-acid polypeptide reads, in one-letter code: Genome polyprotein (3387 aa).

Over 1-100 the chain is Cytoplasmic; that stretch reads MNQRKKVVRP…LNILNGRKRS (100 aa). A hydrophobic; homodimerization of capsid protein C region spans residues 36 to 71; it reads LFSGKGPLRMVLAFITFLRVLSIPPTAGILKRWGQL. Residues 100-113 constitute a propeptide, ER anchor for the capsid protein C, removed in mature form by serine protease NS3; sequence STITLLCLIPTVMA. The chain crosses the membrane as a helical span at residues 101–117; it reads TITLLCLIPTVMAFSLS. Topologically, residues 118-237 are extracellular; sequence TRDGEPLMIV…GAWKHAQRVE (120 aa). Asn-182 carries an N-linked (GlcNAc...) asparagine; by host glycan. A helical transmembrane segment spans residues 238 to 258; sequence SWILRNPGFALLAGFMAYMIG. Residues 259 to 265 are Cytoplasmic-facing; the sequence is QTGIQRT. Residues 266–279 form a helical membrane-spanning segment; it reads VFFVLMMLVAPSYG. The Extracellular portion of the chain corresponds to 280-725; that stretch reads MRCVGVGNRD…HQVFGSVYTT (446 aa). 4 disulfide bridges follow: Cys-282-Cys-309, Cys-339-Cys-400, Cys-353-Cys-384, and Cys-371-Cys-395. Residue Asn-346 is glycosylated (N-linked (GlcNAc...) asparagine; by host). Positions 377–390 are fusion peptide; it reads DRGWGNGCGLFGKG. Asn-432 is a glycosylation site (N-linked (GlcNAc...) asparagine; by host). Intrachain disulfides connect Cys-464–Cys-564 and Cys-581–Cys-612. Residues 726–746 traverse the membrane as a helical segment; sequence MFGGVSWMIRILIGFLVLWIG. The Cytoplasmic portion of the chain corresponds to 747-751; sequence TNSRN. Residues 752–772 form a helical membrane-spanning segment; the sequence is TSMAMTCIAVGGITLFLGFTV. Topologically, residues 773 to 1194 are extracellular; it reads QADMGCVASW…MLGDTMSGRI (422 aa). 6 cysteine pairs are disulfide-bonded: Cys-778-Cys-789, Cys-829-Cys-917, Cys-953-Cys-997, Cys-1054-Cys-1103, Cys-1065-Cys-1087, and Cys-1086-Cys-1090. Asn-904 and Asn-981 each carry an N-linked (GlcNAc...) asparagine; by host glycan. A helical transmembrane segment spans residues 1195–1218; sequence GGQIHLAIMAVFKMSPGYVLGVFL. Residues 1219-1224 lie on the Lumenal side of the membrane; that stretch reads RKLTSR. A helical transmembrane segment spans residues 1225–1243; that stretch reads ETALMVIGMAMTTVLSIPH. Topologically, residues 1244-1267 are cytoplasmic; it reads DLMELIDGISLGLILLKIVTQFDN. A helical transmembrane segment spans residues 1268–1288; it reads TQVGTLALSLTFIRSTMPLVM. Ala-1289 is a topological domain (lumenal). The chain crosses the membrane as a helical span at residues 1290–1308; it reads WRTIMAVLFVVTLIPLCRT. Residues 1309–1316 are Lumenal-facing; the sequence is SCLQKQSH. A helical membrane pass occupies residues 1317–1337; sequence WVEITALILGAQALPVYLMTL. Residues 1338–1345 are Cytoplasmic-facing; sequence MKGASRRS. A helical membrane pass occupies residues 1346-1366; the sequence is WPLNEGIMAVGLVSLLGSALL. Over 1367–1369 the chain is Lumenal; the sequence is KND. The chain crosses the membrane as a helical span at residues 1370–1390; sequence VPLAGPMVAGGLLLAAYVMSG. Topologically, residues 1391–1437 are cytoplasmic; the sequence is SSADLSLEKAANVQWDEMADITGSSPIIEVKQDEDGSFSIRDVEETN. The segment at 1397-1436 is interacts with and activates NS3 protease; sequence LEKAANVQWDEMADITGSSPIIEVKQDEDGSFSIRDVEET. An intramembrane region (helical) is located at residues 1438 to 1458; that stretch reads MITLLVKLALITVSGLYPLAI. Over 1459–2143 the chain is Cytoplasmic; that stretch reads PVTMTLWYMW…QHALNELPES (685 aa). One can recognise a Peptidase S7 domain in the interval 1475 to 1652; the sequence is SGALWDVPSP…ERIGEPDYEV (178 aa). Residues His-1525, Asp-1549, and Ser-1609 each act as charge relay system; for serine protease NS3 activity in the active site. The region spanning 1654–1810 is the Helicase ATP-binding domain; sequence EDIFRKKRLT…QSNSPIEDIE (157 aa). The tract at residues 1658 to 1661 is important for RNA-binding; that stretch reads RKKR. An ATP-binding site is contributed by 1667-1674; the sequence is LHPGAGKT. The DEAH box motif lies at 1758-1761; sequence DEAH. Residues 1820-1987 enclose the Helicase C-terminal domain; sequence TGFDWITDYQ…IIPTLFGPER (168 aa). N6-acetyllysine; by host is present on Lys-1862. Residues 2144-2164 form a helical membrane-spanning segment; sequence LETLMLVALLGAMTAGIFLFF. Over 2165 to 2169 the chain is Lumenal; that stretch reads MQGKG. The segment at residues 2170 to 2190 is an intramembrane region (helical); sequence IGKLSMGLITIAVASGLLWVA. A topological domain (lumenal) is located at residue Glu-2191. The helical transmembrane segment at 2192 to 2212 threads the bilayer; it reads IQPQWIAASIILEFFLMVLLI. Residues 2213 to 2225 are Cytoplasmic-facing; sequence PEPEKQRTPQDNQ. The chain crosses the membrane as a helical span at residues 2226–2246; it reads LIYVILTILTIIGLIAANEMG. Topologically, residues 2247–2270 are lumenal; the sequence is LIEKTKTDFGFYQVKTETTILDVD. The helical intramembrane region spans 2271 to 2291; the sequence is LRPASAWTLYAVATTILTPML. The Lumenal segment spans residues 2292-2301; the sequence is RHTIENTSAN. N-linked (GlcNAc...) asparagine; by host glycans are attached at residues Asn-2297 and Asn-2301. The helical intramembrane region spans 2302–2322; that stretch reads LSLAAIANQAAVLMGLGKGWP. Topologically, residues 2323–2343 are lumenal; sequence LHRMDLGVPLLAMGCYSQVNP. Residues 2344 to 2364 form a helical membrane-spanning segment; sequence TTLTASLVMLLVHYAIIGPGL. Over 2365–2409 the chain is Cytoplasmic; the sequence is QAKATREAQKRTAAGIMKNPTVDGITVIDLEPISYDPKFEKQLGQ. The chain crosses the membrane as a helical span at residues 2410–2430; that stretch reads VMLLVLCAGQLLLMRTTWAFC. The Lumenal portion of the chain corresponds to 2431–2455; that stretch reads EVLTLATGPILTLWEGNPGRFWNTT. Asn-2453 carries N-linked (GlcNAc...) asparagine; by host glycosylation. Residues 2456 to 2476 traverse the membrane as a helical segment; it reads IAVSTANIFRGSYLAGAGLAF. Topologically, residues 2477 to 3387 are cytoplasmic; that stretch reads SLIKNAQTPR…SAPSESEGVL (911 aa). In terms of domain architecture, mRNA cap 0-1 NS5-type MT spans 2489–2751; that stretch reads TGTTGETLGE…DVDLGAGTRS (263 aa). Ser-2543 lines the S-adenosyl-L-methionine pocket. The residue at position 2543 (Ser-2543) is a Phosphoserine. Residue Lys-2548 is the For 2'-O-MTase activity of the active site. Positions 2564–2567 match the SUMO-interacting motif motif; it reads VVDL. S-adenosyl-L-methionine is bound by residues Gly-2573, Trp-2574, Thr-2591, Lys-2592, Asp-2618, and Val-2619. Asp-2633 serves as the catalytic For 2'-O-MTase activity. Position 2634 (Ile-2634) interacts with S-adenosyl-L-methionine. Residues Lys-2668 and Glu-2704 each act as for 2'-O-MTase activity in the active site. Tyr-2706 lines the S-adenosyl-L-methionine pocket. Positions 2925, 2929, 2934, and 2937 each coordinate Zn(2+). The region spanning 3016-3166 is the RdRp catalytic domain; sequence LMYADDTAGW…PLDERFGTSL (151 aa). Zn(2+) is bound by residues His-3200, Cys-3216, and Cys-3335.

It in the N-terminal section; belongs to the class I-like SAM-binding methyltransferase superfamily. mRNA cap 0-1 NS5-type methyltransferase family. As to quaternary structure, homodimer. Interacts (via N-terminus) with host EXOC1 (via C-terminus); this interaction results in EXOC1 degradation through the proteasome degradation pathway. Forms heterodimers with envelope protein E in the endoplasmic reticulum and Golgi. In terms of assembly, homodimer; in the endoplasmic reticulum and Golgi. Interacts with protein prM. Interacts with non-structural protein 1. As to quaternary structure, homodimer; Homohexamer when secreted. Interacts with envelope protein E. Interacts (via N-terminus) with serine protease NS3. In terms of assembly, forms a heterodimer with serine protease NS3. May form homooligomers. As to quaternary structure, forms a heterodimer with NS2B. Interacts with NS4B. Interacts with unphosphorylated RNA-directed RNA polymerase NS5; this interaction stimulates RNA-directed RNA polymerase NS5 guanylyltransferase activity. Interacts with host SHFL. Interacts with host MAVS; this interaction inhibits the synthesis of IFN-beta. Interacts with host SHFL. Interacts with host AUP1; the interaction occurs in the presence of Dengue virus NS4B and induces lipophagy which facilitates production of virus progeny particles. In terms of assembly, interacts with serine protease NS3. As to quaternary structure, homodimer. Interacts with host STAT2; this interaction inhibits the phosphorylation of the latter, and, when all viral proteins are present (polyprotein), targets STAT2 for degradation. Interacts with serine protease NS3. Interacts with host PAF1 complex; the interaction may prevent the recruitment of the PAF1 complex to interferon-responsive genes, and thus reduces the immune response. Specific enzymatic cleavages in vivo yield mature proteins. Cleavages in the lumen of endoplasmic reticulum are performed by host signal peptidase, whereas cleavages in the cytoplasmic side are performed by serine protease NS3. Signal cleavage at the 2K-4B site requires a prior NS3 protease-mediated cleavage at the 4A-2K site. Post-translationally, cleaved in post-Golgi vesicles by a host furin, releasing the mature small envelope protein M, and peptide pr. This cleavage is incomplete as up to 30% of viral particles still carry uncleaved prM. In terms of processing, N-glycosylated. N-glycosylated. The excreted form is glycosylated and this is required for efficient secretion of the protein from infected cells. Post-translationally, acetylated by host KAT5. Acetylation modulates NS3 RNA-binding and unwinding activities and plays an important positive role for viral replication. In terms of processing, sumoylation of RNA-directed RNA polymerase NS5 increases NS5 protein stability allowing proper viral RNA replication. Phosphorylated on serines residues. This phosphorylation may trigger NS5 nuclear localization.

Its subcellular location is the virion. It is found in the host nucleus. It localises to the host cytoplasm. The protein localises to the host perinuclear region. The protein resides in the secreted. Its subcellular location is the virion membrane. It is found in the host endoplasmic reticulum membrane. It localises to the host mitochondrion. It carries out the reaction Selective hydrolysis of -Xaa-Xaa-|-Yaa- bonds in which each of the Xaa can be either Arg or Lys and Yaa can be either Ser or Ala.. The enzyme catalyses RNA(n) + a ribonucleoside 5'-triphosphate = RNA(n+1) + diphosphate. It catalyses the reaction a ribonucleoside 5'-triphosphate + H2O = a ribonucleoside 5'-diphosphate + phosphate + H(+). The catalysed reaction is ATP + H2O = ADP + phosphate + H(+). It carries out the reaction a 5'-end (5'-triphosphoguanosine)-ribonucleoside in mRNA + S-adenosyl-L-methionine = a 5'-end (N(7)-methyl 5'-triphosphoguanosine)-ribonucleoside in mRNA + S-adenosyl-L-homocysteine. The enzyme catalyses a 5'-end (N(7)-methyl 5'-triphosphoguanosine)-ribonucleoside in mRNA + S-adenosyl-L-methionine = a 5'-end (N(7)-methyl 5'-triphosphoguanosine)-(2'-O-methyl-ribonucleoside) in mRNA + S-adenosyl-L-homocysteine + H(+). Its function is as follows. Plays a role in virus budding by binding to the cell membrane and gathering the viral RNA into a nucleocapsid that forms the core of a mature virus particle. During virus entry, may induce genome penetration into the host cytoplasm after hemifusion induced by the surface proteins. Can migrate to the cell nucleus where it modulates host functions. Overcomes the anti-viral effects of host EXOC1 by sequestering and degrading the latter through the proteasome degradation pathway. Functionally, regulates the ATPase activity of the NS3 helicase activity. NS4A allows NS3 helicase to conserve energy during unwinding. Plays a role in the inhibition of the host innate immune response. Interacts with host MAVS and thereby prevents the interaction between RIGI and MAVS. In turn, IFN-beta production is impaired. Interacts with host AUP1 which mediates induction of lipophagy in host cells and facilitates production of virus progeny particles. Inhibits RNA silencing by interfering with host Dicer. In terms of biological role, prevents premature fusion activity of envelope proteins in trans-Golgi by binding to envelope protein E at pH6.0. After virion release in extracellular space, gets dissociated from E dimers. Its function is as follows. Acts as a chaperone for envelope protein E during intracellular virion assembly by masking and inactivating envelope protein E fusion peptide. prM is the only viral peptide matured by host furin in the trans-Golgi network probably to avoid catastrophic activation of the viral fusion activity in acidic Golgi compartment prior to virion release. prM-E cleavage is inefficient, and many virions are only partially matured. These uncleaved prM would play a role in immune evasion. Functionally, may play a role in virus budding. Exerts cytotoxic effects by activating a mitochondrial apoptotic pathway through M ectodomain. May display a viroporin activity. Binds to host cell surface receptor and mediates fusion between viral and cellular membranes. Envelope protein is synthesized in the endoplasmic reticulum in the form of heterodimer with protein prM. They play a role in virion budding in the ER, and the newly formed immature particle is covered with 60 spikes composed of heterodimer between precursor prM and envelope protein E. The virion is transported to the Golgi apparatus where the low pH causes dissociation of PrM-E heterodimers and formation of E homodimers. prM-E cleavage is inefficient, and many virions are only partially matured. These uncleaved prM would play a role in immune evasion. In terms of biological role, involved in immune evasion, pathogenesis and viral replication. Once cleaved off the polyprotein, is targeted to three destinations: the viral replication cycle, the plasma membrane and the extracellular compartment. Essential for viral replication. Required for formation of the replication complex and recruitment of other non-structural proteins to the ER-derived membrane structures. Excreted as a hexameric lipoparticle that plays a role against host immune response. Antagonizing the complement function. Binds to the host macrophages and dendritic cells. Inhibits signal transduction originating from Toll-like receptor 3 (TLR3). Its function is as follows. Disrupts the host endothelial glycocalyx layer of host pulmonary microvascular endothelial cells, inducing degradation of sialic acid and shedding of heparan sulfate proteoglycans. NS1 induces expression of sialidases, heparanase, and activates cathepsin L, which activates heparanase via enzymatic cleavage. These effects are probably linked to the endothelial hyperpermeability observed in severe dengue disease. Functionally, component of the viral RNA replication complex that functions in virion assembly and antagonizes the host immune response. Required cofactor for the serine protease function of NS3. May have membrane-destabilizing activity and form viroporins. In terms of biological role, displays three enzymatic activities: serine protease, NTPase and RNA helicase. NS3 serine protease, in association with NS2B, performs its autocleavage and cleaves the polyprotein at dibasic sites in the cytoplasm: C-prM, NS2A-NS2B, NS2B-NS3, NS3-NS4A, NS4A-2K and NS4B-NS5. NS3 RNA helicase binds RNA and unwinds dsRNA in the 3' to 5' direction. Its function is as follows. Functions as a signal peptide for NS4B and is required for the interferon antagonism activity of the latter. Functionally, induces the formation of ER-derived membrane vesicles where the viral replication takes place. Inhibits interferon (IFN)-induced host STAT1 phosphorylation and nuclear translocation, thereby preventing the establishment of cellular antiviral state by blocking the IFN-alpha/beta pathway. Replicates the viral (+) and (-) RNA genome, and performs the capping of genomes in the cytoplasm. NS5 methylates viral RNA cap at guanine N-7 and ribose 2'-O positions. Besides its role in RNA genome replication, also prevents the establishment of cellular antiviral state by blocking the interferon-alpha/beta (IFN-alpha/beta) signaling pathway. Inhibits host TYK2 and STAT2 phosphorylation, thereby preventing activation of JAK-STAT signaling pathway. May reduce immune responses by preventing the recruitment of the host PAF1 complex to interferon-responsive genes. The chain is Genome polyprotein from Dengue virus type 4 (strain Dominica/814669/1981) (DENV-4).